We begin with the raw amino-acid sequence, 817 residues long: tRNA(Met) cytidine acetyltransferase TmcA (817 aa).

ATP contacts are provided by residues glutamine 265, 289 to 298 (GRGKSVSVGI), and arginine 439. Residues 469 to 664 (ELIRKMEVYL…YTAIVIKPIS (196 aa)) form the N-acetyltransferase domain. Residues 589-591 (IAT), 596-602 (MDLGLGS), glutamate 629, and arginine 636 contribute to the acetyl-CoA site.

This sequence belongs to the RNA cytidine acetyltransferase family. TmcA subfamily.

The protein localises to the cytoplasm. The enzyme catalyses cytidine(34) in elongator tRNA(Met) + acetyl-CoA + ATP + H2O = N(4)-acetylcytidine(34) in elongator tRNA(Met) + ADP + phosphate + CoA + H(+). It catalyses the reaction a cytidine in RNA + acetyl-CoA + ATP + H2O = an N(4)-acetylcytidine in RNA + ADP + phosphate + CoA + H(+). It carries out the reaction a cytidine in tRNA + acetyl-CoA + ATP + H2O = an N(4)-acetylcytidine in tRNA + ADP + phosphate + CoA + H(+). The catalysed reaction is a cytidine in mRNA + acetyl-CoA + ATP + H2O = an N(4)-acetylcytidine in mRNA + ADP + phosphate + CoA + H(+). Catalyzes the formation of N(4)-acetylcytidine (ac(4)C) at the wobble position of tRNA(Met), by using acetyl-CoA as an acetyl donor and ATP (or GTP). In terms of biological role, catalyzes the formation of N(4)-acetylcytidine (ac(4)C) sites in rRNA, tRNA, mRNA and non-coding (nc) RNA, almost always on the middle C of a CCG motif. In hyperthermophiles more acetylation is seen at higher temperatures. This Pyrococcus abyssi (strain GE5 / Orsay) protein is tRNA(Met) cytidine acetyltransferase TmcA.